The chain runs to 88 residues: Phosphocarrier protein HPr (88 aa).

The HPr domain occupies 1 to 88; that stretch reads MAQKTFTVTA…DTMSKEGLGE (88 aa). Position 12 is a phosphoserine (S12). The active-site Pros-phosphohistidine intermediate is the H15. The residue at position 46 (S46) is a Phosphoserine; by HPrK/P.

Belongs to the HPr family.

The protein localises to the cytoplasm. Its activity is regulated as follows. Phosphorylation on Ser-46 inhibits the phosphoryl transfer from enzyme I to HPr. In terms of biological role, general (non sugar-specific) component of the phosphoenolpyruvate-dependent sugar phosphotransferase system (sugar PTS). This major carbohydrate active-transport system catalyzes the phosphorylation of incoming sugar substrates concomitantly with their translocation across the cell membrane. The phosphoryl group from phosphoenolpyruvate (PEP) is transferred to the phosphoryl carrier protein HPr by enzyme I. Phospho-HPr then transfers it to the PTS EIIA domain. P-Ser-HPr interacts with the catabolite control protein A (CcpA), forming a complex that binds to DNA at the catabolite response elements cre, operator sites preceding a large number of catabolite-regulated genes. Thus, P-Ser-HPr is a corepressor in carbon catabolite repression (CCR), a mechanism that allows bacteria to coordinate and optimize the utilization of available carbon sources. P-Ser-HPr also plays a role in inducer exclusion, in which it probably interacts with several non-PTS permeases and inhibits their transport activity. The sequence is that of Phosphocarrier protein HPr (ptsH) from Priestia megaterium (Bacillus megaterium).